A 288-amino-acid polypeptide reads, in one-letter code: 4-hydroxy-tetrahydrodipicolinate synthase (288 aa).

Thr47 lines the pyruvate pocket. Catalysis depends on Tyr136, which acts as the Proton donor/acceptor. Residue Lys164 is the Schiff-base intermediate with substrate of the active site. Ile204 contacts pyruvate.

This sequence belongs to the DapA family. As to quaternary structure, homotetramer; dimer of dimers.

Its subcellular location is the cytoplasm. It catalyses the reaction L-aspartate 4-semialdehyde + pyruvate = (2S,4S)-4-hydroxy-2,3,4,5-tetrahydrodipicolinate + H2O + H(+). Its pathway is amino-acid biosynthesis; L-lysine biosynthesis via DAP pathway; (S)-tetrahydrodipicolinate from L-aspartate: step 3/4. In terms of biological role, catalyzes the condensation of (S)-aspartate-beta-semialdehyde [(S)-ASA] and pyruvate to 4-hydroxy-tetrahydrodipicolinate (HTPA). This Leuconostoc mesenteroides subsp. mesenteroides (strain ATCC 8293 / DSM 20343 / BCRC 11652 / CCM 1803 / JCM 6124 / NCDO 523 / NBRC 100496 / NCIMB 8023 / NCTC 12954 / NRRL B-1118 / 37Y) protein is 4-hydroxy-tetrahydrodipicolinate synthase.